Reading from the N-terminus, the 226-residue chain is Large ribosomal subunit protein uL1 (226 aa).

Belongs to the universal ribosomal protein uL1 family. In terms of assembly, part of the 50S ribosomal subunit.

In terms of biological role, binds directly to 23S rRNA. The L1 stalk is quite mobile in the ribosome, and is involved in E site tRNA release. Protein L1 is also a translational repressor protein, it controls the translation of the L11 operon by binding to its mRNA. In Borreliella burgdorferi (strain ATCC 35210 / DSM 4680 / CIP 102532 / B31) (Borrelia burgdorferi), this protein is Large ribosomal subunit protein uL1.